The primary structure comprises 514 residues: Cytochrome P450 monooxygenase FUS8 (514 aa).

A helical transmembrane segment spans residues 28 to 48 (LTVTKAVGAFIVLFIIIPKVF). Residues asparagine 225 and asparagine 443 are each glycosylated (N-linked (GlcNAc...) asparagine). A heme-binding site is contributed by cysteine 460.

Belongs to the cytochrome P450 family. The cofactor is heme.

The protein resides in the membrane. Its pathway is mycotoxin biosynthesis. Its function is as follows. Cytochrome P450 monooxygenase; part of the gene cluster that mediates the biosynthesis of the mycotoxin fusarin C. Within the cluster, FUS1, FUS2, FUS8 and FUS9 are sufficient for fusarin production. The roles of the other FUS members are yet undetermined. The fusarin C synthetase FUS1 is responsible for the condensation of one acetyl-coenzyme A (CoA) unit with six malonyl-CoA units and the amide linkage of the arising heptaketide and homoserine, subsequently releasing the first intermediate, prefusarin, as an alcohol with an open ring structure. The cytochrome P450 monooxygenase FUS8 participates in multiple oxidation processes at carbon C-20 and is able to use the FUS1 product as substrate, resulting in formation of 20-hydroxy-prefusarin. This reaction seems to be essential before the 2-pyrrolidone ring closure can be catalyzed by FUS2, generating 20-hydroxy-fusarin. FUS8 is able to further oxidizes carbon C-20 after ring closure, resulting in the formation of carboxy-fusarin C. As the last step, FUS9 methylates the hydroxyl group at C-21 to generate fusarin C. Fusarin C can then rearrange to epi-fusarin C, the (z)-isomers, and fusarin A and fusarin D. The sequence is that of Cytochrome P450 monooxygenase FUS8 from Gibberella moniliformis (strain M3125 / FGSC 7600) (Maize ear and stalk rot fungus).